Reading from the N-terminus, the 657-residue chain is Acetyl-coenzyme A synthetase (657 aa).

Residues 192–195 and Thr311 contribute to the CoA site; that span reads RRGK. ATP contacts are provided by residues 387-389, 411-416, Asp504, Arg519, and Arg530; these read GEP and DTWWQT. Positions 543 and 546 each coordinate Mg(2+). Position 592 (Arg592) interacts with CoA. Lys617 bears the N6-acetyllysine mark.

The protein belongs to the ATP-dependent AMP-binding enzyme family. Mg(2+) is required as a cofactor. Acetylated. Deacetylation by the SIR2-homolog deacetylase activates the enzyme.

The catalysed reaction is acetate + ATP + CoA = acetyl-CoA + AMP + diphosphate. Functionally, catalyzes the conversion of acetate into acetyl-CoA (AcCoA), an essential intermediate at the junction of anabolic and catabolic pathways. AcsA undergoes a two-step reaction. In the first half reaction, AcsA combines acetate with ATP to form acetyl-adenylate (AcAMP) intermediate. In the second half reaction, it can then transfer the acetyl group from AcAMP to the sulfhydryl group of CoA, forming the product AcCoA. In Campylobacter jejuni subsp. jejuni serotype O:2 (strain ATCC 700819 / NCTC 11168), this protein is Acetyl-coenzyme A synthetase.